We begin with the raw amino-acid sequence, 376 residues long: Queuine tRNA-ribosyltransferase (376 aa).

The active-site Proton acceptor is the Asp93. Residues 93-97 (DSGGF), Asp147, Gln190, and Gly217 contribute to the substrate site. Residues 248–254 (GVGKPDD) form an RNA binding region. The Nucleophile role is filled by Asp267. Zn(2+)-binding residues include Cys305, Cys307, Cys310, and His336.

The protein belongs to the queuine tRNA-ribosyltransferase family. In terms of assembly, homodimer. Within each dimer, one monomer is responsible for RNA recognition and catalysis, while the other monomer binds to the replacement base PreQ1. The cofactor is Zn(2+).

The enzyme catalyses 7-aminomethyl-7-carbaguanine + guanosine(34) in tRNA = 7-aminomethyl-7-carbaguanosine(34) in tRNA + guanine. It participates in tRNA modification; tRNA-queuosine biosynthesis. In terms of biological role, catalyzes the base-exchange of a guanine (G) residue with the queuine precursor 7-aminomethyl-7-deazaguanine (PreQ1) at position 34 (anticodon wobble position) in tRNAs with GU(N) anticodons (tRNA-Asp, -Asn, -His and -Tyr). Catalysis occurs through a double-displacement mechanism. The nucleophile active site attacks the C1' of nucleotide 34 to detach the guanine base from the RNA, forming a covalent enzyme-RNA intermediate. The proton acceptor active site deprotonates the incoming PreQ1, allowing a nucleophilic attack on the C1' of the ribose to form the product. After dissociation, two additional enzymatic reactions on the tRNA convert PreQ1 to queuine (Q), resulting in the hypermodified nucleoside queuosine (7-(((4,5-cis-dihydroxy-2-cyclopenten-1-yl)amino)methyl)-7-deazaguanosine). The sequence is that of Queuine tRNA-ribosyltransferase from Ruegeria sp. (strain TM1040) (Silicibacter sp.).